Reading from the N-terminus, the 557-residue chain is MVLSDIEIANSVTMEPISKVADQLGIDKEALCLYGKYKAKIDARQLVALKDKPDGKLILVTAISPTPAGEGKTTTSVGLVDALSAIGKKAVIALREPSLGPVFGVKGGAAGGGHAQVVPMEDINLHFTGDFHAIGVANNLLAALIDNHIHHGNSLGIDSRRITWKRVVDMNDRQLRHIVDGLQGKVNGVPREDGYDITVASEIMAILCLSENISDLKARLEKIIIGYNFQGEPVTAKDLKAGGALAALLKDAIHPNLVQTLEHTPALIHGGPFANIAHGCNSVLATKLALKYGDYAVTEAGFGADLGAEKFIDIKCRMSGLRPAAVVLVATIRALKMHGGVPKADLATENVQAVVDGLPNLDKHLANIQDVYGLPVVVAINKFPLDTDAELQAVYDACDKRGVDVVISDVWANGGAGGRELAEKVVALAEQDNQFRFVYEEDDSIETKLTKIVTKVYGGKGIKLTPTAKRELAELERLGFGNYPICMAKTQYSFSDDAKKLGAPTDFIVTISNLKVSAGAGFIVALTGAIMTMPGLPKVPASETIDIDEEGNITGLF.

66 to 73 (TPAGEGKT) is a binding site for ATP.

Belongs to the formate--tetrahydrofolate ligase family.

It carries out the reaction (6S)-5,6,7,8-tetrahydrofolate + formate + ATP = (6R)-10-formyltetrahydrofolate + ADP + phosphate. It functions in the pathway one-carbon metabolism; tetrahydrofolate interconversion. The protein is Formate--tetrahydrofolate ligase 2 of Streptococcus pyogenes serotype M5 (strain Manfredo).